The following is a 158-amino-acid chain: NAD(P)H-quinone oxidoreductase subunit J, chloroplastic (158 aa).

This sequence belongs to the complex I 30 kDa subunit family. In terms of assembly, NDH is composed of at least 16 different subunits, 5 of which are encoded in the nucleus.

Its subcellular location is the plastid. It is found in the chloroplast thylakoid membrane. It carries out the reaction a plastoquinone + NADH + (n+1) H(+)(in) = a plastoquinol + NAD(+) + n H(+)(out). The catalysed reaction is a plastoquinone + NADPH + (n+1) H(+)(in) = a plastoquinol + NADP(+) + n H(+)(out). NDH shuttles electrons from NAD(P)H:plastoquinone, via FMN and iron-sulfur (Fe-S) centers, to quinones in the photosynthetic chain and possibly in a chloroplast respiratory chain. The immediate electron acceptor for the enzyme in this species is believed to be plastoquinone. Couples the redox reaction to proton translocation, and thus conserves the redox energy in a proton gradient. This Pelargonium hortorum (Common geranium) protein is NAD(P)H-quinone oxidoreductase subunit J, chloroplastic.